The sequence spans 428 residues: Endoplasmic reticulum junction formation protein lunapark (428 aa).

Gly-2 carries N-myristoyl glycine lipidation. At 2-45 (GGLFSRWRTKLSTVEVLESIDKEIQALEEFREKNQRLQKLRVGR) the chain is on the cytoplasmic side. Positions 16-43 (EVLESIDKEIQALEEFREKNQRLQKLRV) form a coiled coil. The helical transmembrane segment at 46–66 (LILYSSVLYLFTCLIVYLWYL) threads the bilayer. At 67–77 (PDEFTARLAMT) the chain is on the lumenal side. Residues 78–98 (LPFFAFPLIIWSIRTVIIFFF) form a helical membrane-spanning segment. Over 99–428 (SKRTERNNEA…ELNGESLTAE (330 aa)) the chain is Cytoplasmic. The stretch at 102–128 (TERNNEALDDLKSQRKKILEEVMEKET) forms a coiled coil. Phosphoserine is present on residues Ser-114, Ser-153, Ser-177, Ser-182, and Ser-194. The tract at residues 143–248 (SKKAKECEPP…PPGPPLARPI (106 aa)) is disordered. Residues 185-198 (QGPPPQVPVSPGPP) are compositionally biased toward pro residues. Thr-211 and Thr-213 each carry phosphothreonine. 2 positions are modified to phosphoserine: Ser-217 and Ser-227. The C4-type; plays a role in ER morphology zinc finger occupies 276–301 (CQQCFSHNGMALKEEFEYIAFRCAYC). Phosphoserine occurs at positions 321, 353, and 384. The interval 361–428 (NNTEQTDDKI…ELNGESLTAE (68 aa)) is disordered. The span at 386-401 (SEEPEEKQETENEEAS) shows a compositional bias: acidic residues. Ser-414 carries the phosphoserine modification.

This sequence belongs to the lunapark family. In terms of assembly, homodimer; homodimerization requires the C4-type zinc finger motif and decreases during mitosis in a phosphorylation-dependent manner. In terms of processing, myristoylated; myristoylation is necessary for the endoplasmic reticulum (ER) three-way ER tubular junction formation, but is not required neither for membrane translocation, membrane topology formation, nor for the specific localization to ER membranes. Post-translationally, phosphorylated. Phosphorylation occurs at Ser-177, Ser-182, Ser-217, Ser-227, Ser-321 and Ser-384 during interphase. Phosphorylation occurs at Ser-114, Ser-153, Ser-194, Thr-211 and Ser-353 during mitosis; these phosphorylations reduce both its homodimerization and the ER three-way tubular junction formation. Subject to proteasomal degradation following phosphorylation during mitosis.

The protein resides in the endoplasmic reticulum membrane. In terms of biological role, endoplasmic reticulum (ER)-shaping membrane protein that plays a role in determining ER morphology. Involved in the stabilization of nascent three-way ER tubular junctions within the ER network. May also play a role as a curvature-stabilizing protein within three-way ER tubular junction network. May be involved in limb and central nervous system development. This is Endoplasmic reticulum junction formation protein lunapark from Pongo abelii (Sumatran orangutan).